Here is a 787-residue protein sequence, read N- to C-terminus: Lysine-specific demethylase JMJ13 (787 aa).

Residues cysteine 103–proline 144 form the JmjN domain. One can recognise a JmjC domain in the interval serine 250–alanine 420. 3 residues coordinate Fe cation: histidine 293, glutamate 295, and histidine 388. Zn(2+) is bound by residues cysteine 500, cysteine 503, cysteine 514, cysteine 516, histidine 519, cysteine 522, histidine 525, and cysteine 534. Residues cysteine 500–alanine 551 form a C4HCHC zinc finger. A C5HC2 zinc finger spans residues cysteine 500–alanine 551. In terms of domain architecture, FYR N-terminal spans valine 617–glutamate 675. In terms of domain architecture, FYR C-terminal spans leucine 677 to threonine 756. The tract at residues glutamate 712–isoleucine 769 is disordered. The short motif at asparagine 752 to glutamine 759 is the Nuclear localization signal element.

This sequence belongs to the JARID1 histone demethylase family. Requires Fe(2+) as cofactor. As to expression, mostly expressed in leaves, and, to a lower extent, in inflorescences, roots, siliques and stems.

The protein localises to the nucleus. The enzyme catalyses N(6),N(6),N(6)-trimethyl-L-lysyl(27)-[histone H3] + 2-oxoglutarate + O2 = N(6),N(6)-dimethyl-L-lysyl(27)-[histone H3] + formaldehyde + succinate + CO2. Functionally, histone demethylase that demethylates 'Lys-27' (H3K27me) of histone H3 with a specific activity for H3K27me3 and involved in the regulation of gene expression. Acts as a temperature and photoperiod dependent flowering repressor. This chain is Lysine-specific demethylase JMJ13, found in Arabidopsis thaliana (Mouse-ear cress).